A 494-amino-acid chain; its full sequence is ATP synthase subunit beta, plastid (494 aa).

Position 169-176 (169-176 (GGAGVGKT)) interacts with ATP.

The protein belongs to the ATPase alpha/beta chains family. In terms of assembly, F-type ATPases have 2 components, CF(1) - the catalytic core - and CF(0) - the membrane proton channel. CF(1) has five subunits: alpha(3), beta(3), gamma(1), delta(1), epsilon(1). CF(0) has four main subunits: a(1), b(1), b'(1) and c(9-12).

Its subcellular location is the plastid membrane. It carries out the reaction ATP + H2O + 4 H(+)(in) = ADP + phosphate + 5 H(+)(out). In terms of biological role, produces ATP from ADP in the presence of a proton gradient across the membrane. The catalytic sites are hosted primarily by the beta subunits. The chain is ATP synthase subunit beta, plastid (atpB) from Cuscuta sandwichiana (Kauna'oa).